The following is a 66-amino-acid chain: ATP synthase protein 8 (66 aa).

The helical transmembrane segment at 8–24 threads the bilayer; that stretch reads TWLMMIMSMFLALFIIF. The residue at position 54 (lysine 54) is an N6-acetyllysine; alternate. Lysine 54 bears the N6-succinyllysine; alternate mark. Lysine 57 bears the N6-acetyllysine mark.

Belongs to the ATPase protein 8 family. In terms of assembly, F-type ATPases have 2 components, CF(1) - the catalytic core - and CF(0) - the membrane proton channel. Component of an ATP synthase complex composed of ATP5PB, ATP5MC1, ATP5F1E, ATP5PD, ATP5ME, ATP5PF, ATP5MF, MT-ATP6, MT-ATP8, ATP5F1A, ATP5F1B, ATP5F1D, ATP5F1C, ATP5PO, ATP5MG, ATP5MK and ATP5MJ. Interacts with PRICKLE3.

Its subcellular location is the mitochondrion membrane. In terms of biological role, mitochondrial membrane ATP synthase (F(1)F(0) ATP synthase or Complex V) produces ATP from ADP in the presence of a proton gradient across the membrane which is generated by electron transport complexes of the respiratory chain. F-type ATPases consist of two structural domains, F(1) - containing the extramembraneous catalytic core and F(0) - containing the membrane proton channel, linked together by a central stalk and a peripheral stalk. During catalysis, ATP synthesis in the catalytic domain of F(1) is coupled via a rotary mechanism of the central stalk subunits to proton translocation. Part of the complex F(0) domain. Minor subunit located with subunit a in the membrane. This is ATP synthase protein 8 (MT-ATP8) from Cervus elaphus hippelaphus (European red deer).